A 310-amino-acid polypeptide reads, in one-letter code: HTH-type transcriptional activator TtdR (310 aa).

The HTH lysR-type domain occupies 6–63 (PLAKDLQVLVEIVHSGSFSAAAATLGQTPAFVTKRIQILENTLATTLLNRSARGVALT). Residues 23–42 (FSAAAATLGQTPAFVTKRIQ) constitute a DNA-binding region (H-T-H motif).

This sequence belongs to the LysR transcriptional regulatory family.

Functionally, positive regulator required for L-tartrate-dependent anaerobic growth on glycerol. Induces expression of the ttdA-ttdB-ygjE operon. This Escherichia coli (strain K12) protein is HTH-type transcriptional activator TtdR (ttdR).